The sequence spans 205 residues: GTP cyclohydrolase-2 (205 aa).

49–53 contributes to the GTP binding site; the sequence is RLHSE. Positions 54, 65, and 67 each coordinate Zn(2+). GTP contacts are provided by residues Q70, 92–94, and T114; that span reads EGR. Residue D126 is the Proton acceptor of the active site. The active-site Nucleophile is the R128. 2 residues coordinate GTP: T149 and K154.

The protein belongs to the GTP cyclohydrolase II family. Zn(2+) is required as a cofactor.

The catalysed reaction is GTP + 4 H2O = 2,5-diamino-6-hydroxy-4-(5-phosphoribosylamino)-pyrimidine + formate + 2 phosphate + 3 H(+). It functions in the pathway cofactor biosynthesis; riboflavin biosynthesis; 5-amino-6-(D-ribitylamino)uracil from GTP: step 1/4. Catalyzes the conversion of GTP to 2,5-diamino-6-ribosylamino-4(3H)-pyrimidinone 5'-phosphate (DARP), formate and pyrophosphate. This Pseudomonas putida (strain GB-1) protein is GTP cyclohydrolase-2.